A 1124-amino-acid polypeptide reads, in one-letter code: Phytochrome A (1124 aa).

Residues 1–19 are compositionally biased toward low complexity; sequence MSTTRPSQSSNNSGRSRNS. Positions 1–21 are disordered; it reads MSTTRPSQSSNNSGRSRNSAR. In terms of domain architecture, GAF spans 218–401; the sequence is SMERLCDTMV…VFAIHVNKEI (184 aa). Residue Cys-323 coordinates phytochromobilin. PAS domains follow at residues 617–687 and 750–821; these read VTSE…LQGE and DYKA…VNFG. The region spanning 901–1120 is the Histidine kinase domain; the sequence is YMKRQIRNPL…ILSVELAAAH (220 aa).

This sequence belongs to the phytochrome family. As to quaternary structure, homodimer. Contains one covalently linked phytochromobilin chromophore.

Its function is as follows. Regulatory photoreceptor which exists in two forms that are reversibly interconvertible by light: the Pr form that absorbs maximally in the red region of the spectrum and the Pfr form that absorbs maximally in the far-red region. Photoconversion of Pr to Pfr induces an array of morphogenic responses, whereas reconversion of Pfr to Pr cancels the induction of those responses. Pfr controls the expression of a number of nuclear genes including those encoding the small subunit of ribulose-bisphosphate carboxylase, chlorophyll A/B binding protein, protochlorophyllide reductase, rRNA, etc. It also controls the expression of its own gene(s) in a negative feedback fashion. In Pisum sativum (Garden pea), this protein is Phytochrome A (PHYA).